The primary structure comprises 319 residues: Acetyl esterase (319 aa).

The Involved in the stabilization of the negatively charged intermediate by the formation of the oxyanion hole signature appears at 91 to 93; the sequence is HGG. Active-site residues include Ser165, Asp262, and His292.

Belongs to the 'GDXG' lipolytic enzyme family. Homodimer. Interacts with MalT and MelA.

The protein resides in the cytoplasm. Its function is as follows. Displays esterase activity towards short chain fatty esters (acyl chain length of up to 8 carbons). Able to hydrolyze triacetylglycerol (triacetin) and tributyrylglycerol (tributyrin), but not trioleylglycerol (triolein) or cholesterol oleate. Negatively regulates MalT activity by antagonizing maltotriose binding. Inhibits MelA galactosidase activity. This chain is Acetyl esterase, found in Escherichia coli O9:H4 (strain HS).